We begin with the raw amino-acid sequence, 480 residues long: ATP-dependent rRNA helicase RRP3 (480 aa).

2 stretches are compositionally biased toward basic and acidic residues: residues 1-17 (MAKA…KEES) and 33-46 (DTTK…EPKK). The disordered stretch occupies residues 1 to 63 (MAKATEKRVK…VEVDESEEQT (63 aa)). The Q motif signature appears at 64-92 (KTFKDLGVIDSICETCEELKFTKPTPIQA). Residues 95–266 (IPYALEGRDI…RASLVDPVRV (172 aa)) form the Helicase ATP-binding domain. 108–115 (AQTGSGKT) contributes to the ATP binding site. Positions 214 to 217 (DEAD) match the DEAD box motif. The Helicase C-terminal domain maps to 277–437 (NLLQYMVFCP…SYPLESEAVM (161 aa)). A disordered region spans residues 450-480 (AIQEMKGEDGTKKRSKFDKKRRRDEMDIGEQ). Residues 462-471 (KRSKFDKKRR) are compositionally biased toward basic residues.

Belongs to the DEAD box helicase family. DDX47/RRP3 subfamily. Interacts with the SSU processome.

It localises to the nucleus. The enzyme catalyses ATP + H2O = ADP + phosphate + H(+). In terms of biological role, ATP-dependent rRNA helicase required for pre-ribosomal RNA processing. Involved in the maturation of the 35S-pre-rRNA and to its cleavage to mature 18S rRNA. The polypeptide is ATP-dependent rRNA helicase RRP3 (Yarrowia lipolytica (strain CLIB 122 / E 150) (Yeast)).